A 241-amino-acid polypeptide reads, in one-letter code: Chloride intracellular channel protein 1 (241 aa).

Ala2 bears the N-acetylalanine mark. The interval 2–90 (AEEQPQVELF…EEFLEAVLCP (89 aa)) is required for insertion into the membrane. Position 13 is an N6-acetyllysine (Lys13). The G-site motif lies at 24–27 (CPFS). Cys24 and Cys59 are oxidised to a cystine. Residues 26-46 (FSQRLFMVLWLKGVTFNVTTV) form a helical membrane-spanning segment. The region spanning 93 to 233 (YPKLAALNPE…PDDEEIELAY (141 aa)) is the GST C-terminal domain. Lys119 bears the N6-acetyllysine mark. Ser121 carries the phosphoserine modification. The residue at position 131 (Lys131) is an N6-acetyllysine. A Phosphoserine modification is found at Ser156. Tyr233 carries the post-translational modification Phosphotyrosine.

Belongs to the chloride channel CLIC family. Monomer. Homodimer (in vitro). Interacts with TRAPPC2. Dimerization requires a conformation change that leads to the exposure of a large hydrophobic surface. In vivo, this may lead to membrane insertion.

It localises to the nucleus. The protein localises to the nucleus membrane. Its subcellular location is the cytoplasm. The protein resides in the cell membrane. It is found in the endoplasmic reticulum. The enzyme catalyses L-dehydroascorbate + 2 glutathione = glutathione disulfide + L-ascorbate. It carries out the reaction chloride(in) = chloride(out). It catalyses the reaction iodide(out) = iodide(in). The catalysed reaction is thiocyanate(in) = thiocyanate(out). The enzyme catalyses nitrate(in) = nitrate(out). It carries out the reaction bromide(in) = bromide(out). It catalyses the reaction fluoride(in) = fluoride(out). In terms of biological role, in the soluble state, catalyzes glutaredoxin-like thiol disulfide exchange reactions with reduced glutathione as electron donor. Reduces selenite and dehydroascorbate and may act as an antioxidant during oxidative stress response. Can insert into membranes and form voltage-dependent multi-ion conductive channels. Membrane insertion seems to be redox-regulated and may occur only under oxidizing conditions. Involved in regulation of the cell cycle. This chain is Chloride intracellular channel protein 1 (CLIC1), found in Bos taurus (Bovine).